A 78-amino-acid chain; its full sequence is Beta-defensin 135 (78 aa).

Residues Met1–Ser24 form the signal peptide. Disulfide bonds link Cys37–Cys64 and Cys48–Cys66.

It belongs to the beta-defensin family.

It localises to the secreted. Its function is as follows. Has antibacterial activity. This is Beta-defensin 135 (DEFB135) from Pan troglodytes (Chimpanzee).